Here is a 377-residue protein sequence, read N- to C-terminus: 6-oxocyclohex-1-ene-1-carbonyl-CoA hydrolase (377 aa).

Belongs to the enoyl-CoA hydratase/isomerase family. In terms of assembly, homotetramer.

The catalysed reaction is 6-oxocyclohex-1-ene-1-carbonyl-CoA + 2 H2O = 3-hydroxy-6-carboxyhexanoyl-CoA + H(+). It functions in the pathway aromatic compound metabolism; benzoyl-CoA degradation. In terms of biological role, involved in the central benzoyl-CoA catabolism. Catalyzes the addition of one molecule of water to the double bond and the hydrolytic cleavage of C-C bond in the alicyclic ring, 6-oxocyclohex-1-ene-1-carbonyl-CoA (6-OCH-CoA) to yield 3-hydroxypimelyl-CoA. This chain is 6-oxocyclohex-1-ene-1-carbonyl-CoA hydrolase (oah), found in Thauera aromatica.